Here is a 476-residue protein sequence, read N- to C-terminus: Glutamate--tRNA ligase (476 aa).

The 'HIGH' region signature appears at 8–18; it reads PSPTGTLHIGT. Positions 247–251 match the 'KMSKS' region motif; that stretch reads KLSKR. Residue Lys-250 coordinates ATP.

This sequence belongs to the class-I aminoacyl-tRNA synthetase family. Glutamate--tRNA ligase type 1 subfamily. Monomer.

It localises to the cytoplasm. It catalyses the reaction tRNA(Glu) + L-glutamate + ATP = L-glutamyl-tRNA(Glu) + AMP + diphosphate. Functionally, catalyzes the attachment of glutamate to tRNA(Glu) in a two-step reaction: glutamate is first activated by ATP to form Glu-AMP and then transferred to the acceptor end of tRNA(Glu). The sequence is that of Glutamate--tRNA ligase from Synechococcus sp. (strain WH7803).